Consider the following 130-residue polypeptide: Gonadotropin subunit beta-1 (130 aa).

An N-terminal signal peptide occupies residues 1–18 (MRMRFVVMVILLPALMMS). Intrachain disulfides connect cysteine 26/cysteine 74, cysteine 40/cysteine 89, cysteine 51/cysteine 105, cysteine 55/cysteine 107, and cysteine 110/cysteine 117. Asparagine 30 carries an N-linked (GlcNAc...) asparagine glycan.

This sequence belongs to the glycoprotein hormones subunit beta family. In terms of assembly, heterodimer of an alpha and a beta chain.

The protein resides in the secreted. Functionally, involved in gametogenesis and steroidogenesis. In Carassius auratus (Goldfish), this protein is Gonadotropin subunit beta-1 (cgba).